Reading from the N-terminus, the 338-residue chain is 2,3-dihydroxybenzoate decarboxylase (338 aa).

C251 is a catalytic residue.

It belongs to the metallo-dependent hydrolases superfamily. As to quaternary structure, homotetramer.

The catalysed reaction is 2,3-dihydroxybenzoate + H(+) = catechol + CO2. Its pathway is aromatic compound metabolism; benzoate degradation via hydroxylation. In terms of biological role, has an absolute substrate specificity for 2,3-DHBA. The polypeptide is 2,3-dihydroxybenzoate decarboxylase (Aspergillus oryzae (strain ATCC 42149 / RIB 40) (Yellow koji mold)).